The sequence spans 359 residues: DNA polymerase IV (359 aa).

One can recognise a UmuC domain in the interval 4-185; sequence IIHVDMDCFF…LALIKIPGVG (182 aa). Mg(2+) contacts are provided by Asp8 and Asp103. Glu104 is an active-site residue.

Belongs to the DNA polymerase type-Y family. Monomer. The cofactor is Mg(2+).

The protein localises to the cytoplasm. The catalysed reaction is DNA(n) + a 2'-deoxyribonucleoside 5'-triphosphate = DNA(n+1) + diphosphate. In terms of biological role, poorly processive, error-prone DNA polymerase involved in untargeted mutagenesis. Copies undamaged DNA at stalled replication forks, which arise in vivo from mismatched or misaligned primer ends. These misaligned primers can be extended by PolIV. Exhibits no 3'-5' exonuclease (proofreading) activity. May be involved in translesional synthesis, in conjunction with the beta clamp from PolIII. The sequence is that of DNA polymerase IV from Shewanella loihica (strain ATCC BAA-1088 / PV-4).